Consider the following 446-residue polypeptide: Tryptophan synthase beta chain 2 (446 aa).

Lysine 110 bears the N6-(pyridoxal phosphate)lysine mark.

This sequence belongs to the TrpB family. Tetramer of two alpha and two beta chains. Requires pyridoxal 5'-phosphate as cofactor.

The catalysed reaction is (1S,2R)-1-C-(indol-3-yl)glycerol 3-phosphate + L-serine = D-glyceraldehyde 3-phosphate + L-tryptophan + H2O. It functions in the pathway amino-acid biosynthesis; L-tryptophan biosynthesis; L-tryptophan from chorismate: step 5/5. Functionally, the beta subunit is responsible for the synthesis of L-tryptophan from indole and L-serine. The protein is Tryptophan synthase beta chain 2 (trpB2) of Pyrococcus furiosus (strain ATCC 43587 / DSM 3638 / JCM 8422 / Vc1).